The chain runs to 333 residues: Ornithine carbamoyltransferase (333 aa).

Carbamoyl phosphate-binding positions include 56–59 (STRT), Gln-83, Arg-107, and 134–137 (HPTQ). L-ornithine is bound by residues Asn-167, Asp-231, and 235 to 236 (SM). Carbamoyl phosphate-binding positions include 273–274 (CL) and Arg-318.

It belongs to the aspartate/ornithine carbamoyltransferase superfamily. OTCase family.

The protein localises to the cytoplasm. The enzyme catalyses carbamoyl phosphate + L-ornithine = L-citrulline + phosphate + H(+). It functions in the pathway amino-acid biosynthesis; L-arginine biosynthesis; L-arginine from L-ornithine and carbamoyl phosphate: step 1/3. Functionally, reversibly catalyzes the transfer of the carbamoyl group from carbamoyl phosphate (CP) to the N(epsilon) atom of ornithine (ORN) to produce L-citrulline. This chain is Ornithine carbamoyltransferase (argF), found in Staphylococcus aureus (strain COL).